A 273-amino-acid chain; its full sequence is NH(3)-dependent NAD(+) synthetase (273 aa).

46–53 (GISGGQDS) serves as a coordination point for ATP. Aspartate 52 is a Mg(2+) binding site. Arginine 139 contacts deamido-NAD(+). Threonine 159 provides a ligand contact to ATP. Glutamate 164 contacts Mg(2+). Deamido-NAD(+) is bound by residues lysine 172 and aspartate 179. ATP is bound by residues lysine 188 and threonine 210. 259–260 (HK) lines the deamido-NAD(+) pocket.

The protein belongs to the NAD synthetase family. As to quaternary structure, homodimer.

It catalyses the reaction deamido-NAD(+) + NH4(+) + ATP = AMP + diphosphate + NAD(+) + H(+). It participates in cofactor biosynthesis; NAD(+) biosynthesis; NAD(+) from deamido-NAD(+) (ammonia route): step 1/1. Functionally, catalyzes the ATP-dependent amidation of deamido-NAD to form NAD. Uses ammonia as a nitrogen source. The protein is NH(3)-dependent NAD(+) synthetase of Streptococcus thermophilus (strain ATCC BAA-250 / LMG 18311).